Here is a 124-residue protein sequence, read N- to C-terminus: Small ribosomal subunit protein uS12 (124 aa).

Aspartate 89 bears the 3-methylthioaspartic acid mark. The segment at 105–124 (QGVKNRKQARSRYGAKKEKS) is disordered. Residues 108 to 118 (KNRKQARSRYG) show a composition bias toward basic residues.

Belongs to the universal ribosomal protein uS12 family. Part of the 30S ribosomal subunit. Contacts proteins S8 and S17. May interact with IF1 in the 30S initiation complex.

Its function is as follows. With S4 and S5 plays an important role in translational accuracy. Interacts with and stabilizes bases of the 16S rRNA that are involved in tRNA selection in the A site and with the mRNA backbone. Located at the interface of the 30S and 50S subunits, it traverses the body of the 30S subunit contacting proteins on the other side and probably holding the rRNA structure together. The combined cluster of proteins S8, S12 and S17 appears to hold together the shoulder and platform of the 30S subunit. The polypeptide is Small ribosomal subunit protein uS12 (Mycobacterium avium (strain 104)).